A 213-amino-acid polypeptide reads, in one-letter code: Kynurenine formamidase (213 aa).

Residue Trp18 participates in substrate binding. The Zn(2+) site is built by His48, His52, and Asp54. His58 acts as the Proton donor/acceptor in catalysis. Residues His160 and Glu172 each coordinate Zn(2+).

Belongs to the Cyclase 1 superfamily. KynB family. Homodimer. Zn(2+) is required as a cofactor.

It carries out the reaction N-formyl-L-kynurenine + H2O = L-kynurenine + formate + H(+). The protein operates within amino-acid degradation; L-tryptophan degradation via kynurenine pathway; L-kynurenine from L-tryptophan: step 2/2. Catalyzes the hydrolysis of N-formyl-L-kynurenine to L-kynurenine, the second step in the kynurenine pathway of tryptophan degradation. The polypeptide is Kynurenine formamidase (Burkholderia thailandensis (strain ATCC 700388 / DSM 13276 / CCUG 48851 / CIP 106301 / E264)).